The sequence spans 142 residues: Hemoglobin subunit alpha-2 (142 aa).

The 141-residue stretch at 2 to 142 (VLSAADKTNV…VSTVLTSKYR (141 aa)) folds into the Globin domain. An O2-binding site is contributed by His59. Position 88 (His88) interacts with heme b.

The protein belongs to the globin family. In terms of assembly, heterotetramer of two alpha chains and two beta chains. As to expression, red blood cells.

In terms of biological role, involved in oxygen transport from the lung to the various peripheral tissues. Functionally, hemopressin acts as an antagonist peptide of the cannabinoid receptor CNR1. Hemopressin-binding efficiently blocks cannabinoid receptor CNR1 and subsequent signaling. The chain is Hemoglobin subunit alpha-2 (HBA2) from Equus quagga burchellii (Burchell's zebra).